The chain runs to 839 residues: Protein translocase subunit SecA (839 aa).

ATP-binding positions include Gln85, Gly103 to Thr107, and Asp493. A compositionally biased stretch (basic and acidic residues) spans Gln780–Ser790. The disordered stretch occupies residues Gln780–Ser839. Residues Gln791–Thr809 are compositionally biased toward polar residues. The Zn(2+) site is built by Cys821, Cys823, Cys832, and His833. The segment covering Lys827–Ser839 has biased composition (basic residues).

This sequence belongs to the SecA family. As to quaternary structure, monomer and homodimer. Part of the essential Sec protein translocation apparatus which comprises SecA, SecYEG and auxiliary proteins SecDF. Other proteins may also be involved. It depends on Zn(2+) as a cofactor.

The protein localises to the cell membrane. It is found in the cytoplasm. It carries out the reaction ATP + H2O + cellular proteinSide 1 = ADP + phosphate + cellular proteinSide 2.. Part of the Sec protein translocase complex. Interacts with the SecYEG preprotein conducting channel. Has a central role in coupling the hydrolysis of ATP to the transfer of proteins into and across the cell membrane, serving as an ATP-driven molecular motor driving the stepwise translocation of polypeptide chains across the membrane. In Streptococcus pyogenes serotype M1, this protein is Protein translocase subunit SecA.